The chain runs to 435 residues: Glutamyl-tRNA reductase (435 aa).

Substrate is bound by residues Thr-49–Arg-52, Ser-118, Glu-123–Gln-125, and Gln-129. Cys-50 (nucleophile) is an active-site residue. Gly-203–Ile-208 serves as a coordination point for NADP(+).

This sequence belongs to the glutamyl-tRNA reductase family. In terms of assembly, homodimer.

It catalyses the reaction (S)-4-amino-5-oxopentanoate + tRNA(Glu) + NADP(+) = L-glutamyl-tRNA(Glu) + NADPH + H(+). The protein operates within porphyrin-containing compound metabolism; protoporphyrin-IX biosynthesis; 5-aminolevulinate from L-glutamyl-tRNA(Glu): step 1/2. Its function is as follows. Catalyzes the NADPH-dependent reduction of glutamyl-tRNA(Glu) to glutamate 1-semialdehyde (GSA). The chain is Glutamyl-tRNA reductase from Glaesserella parasuis serovar 5 (strain SH0165) (Haemophilus parasuis).